The following is a 252-amino-acid chain: 5-oxoprolinase subunit A (252 aa).

This sequence belongs to the LamB/PxpA family. As to quaternary structure, forms a complex composed of PxpA, PxpB and PxpC.

The catalysed reaction is 5-oxo-L-proline + ATP + 2 H2O = L-glutamate + ADP + phosphate + H(+). Functionally, catalyzes the cleavage of 5-oxoproline to form L-glutamate coupled to the hydrolysis of ATP to ADP and inorganic phosphate. In Corynebacterium glutamicum (strain R), this protein is 5-oxoprolinase subunit A.